Here is a 353-residue protein sequence, read N- to C-terminus: S-adenosylmethionine:tRNA ribosyltransferase-isomerase (353 aa).

It belongs to the QueA family. As to quaternary structure, monomer.

The protein resides in the cytoplasm. The catalysed reaction is 7-aminomethyl-7-carbaguanosine(34) in tRNA + S-adenosyl-L-methionine = epoxyqueuosine(34) in tRNA + adenine + L-methionine + 2 H(+). It functions in the pathway tRNA modification; tRNA-queuosine biosynthesis. Its function is as follows. Transfers and isomerizes the ribose moiety from AdoMet to the 7-aminomethyl group of 7-deazaguanine (preQ1-tRNA) to give epoxyqueuosine (oQ-tRNA). This Rickettsia bellii (strain RML369-C) protein is S-adenosylmethionine:tRNA ribosyltransferase-isomerase.